We begin with the raw amino-acid sequence, 356 residues long: MSLLSDLINLNLSDATDKVIAEYIWIGGSGTDLRSKARTLTGPVNHPSKLPKWNYDGSSTGQAPGEDSEVIYILRQFFKDPFRRGNNILVICDTYTPAGEPIPTNKRHGAAKIFSHPEVVAEVPWYGIEQEYTLLQKDVKWPLGWPVGGYPGPQGPYYCGIGADKAWGRDIVDAHYKACLYAGINISGINGEVMPGQWEFQVGPSVGISAGDEVWAARYILERITEIAGVVLSLDPKPIQGDWNGAGAHTNYSTKSMRNNGGYEIIKKAIEKLGLRHKEHIAAYGEGNERRLTGRHETADINTFKWGVANRGASIRVGRDTEKEGKGYFEDRRPASNMDPYVVTSMIAETTLLWKP.

In terms of domain architecture, GS beta-grasp spans 19–99 (VIAEYIWIGG…VICDTYTPAG (81 aa)). Residues 106-356 (KRHGAAKIFS…IAETTLLWKP (251 aa)) enclose the GS catalytic domain.

Belongs to the glutamine synthetase family. In terms of assembly, homooctamer. As to expression, found at highest levels in root nodules.

The protein resides in the cytoplasm. The enzyme catalyses L-glutamate + NH4(+) + ATP = L-glutamine + ADP + phosphate + H(+). The chain is Glutamine synthetase (GLN1) from Alnus glutinosa (European alder).